A 296-amino-acid polypeptide reads, in one-letter code: uncharacterized protein (296 aa).

The next 6 membrane-spanning stretches (helical) occupy residues M1–Y21, L30–L50, F71–C91, L92–A112, I113–F133, and I142–C162.

Belongs to the MscS (TC 1.A.23) family.

It is found in the cell membrane. This is an uncharacterized protein from Synechocystis sp. (strain ATCC 27184 / PCC 6803 / Kazusa).